Consider the following 288-residue polypeptide: MKSIRLIIISGLSGSGKSVALHTLEDQGWYCIDNLPIGLLSAFARHVNDTCPAGGGRYAVGIDARNRPEDLDRIPAILDELQALGLNSEVLFLFASRETLITRFSETRRRHPLSDGDAALADAIAREEALLAPLRARADLTLDTSNTNVHQLRDLVRERIEHDPGRLSLLFQSFGYKHGIPPDADYVFDARCLPNPHWEPRLRPLTGLDAPVQHYLEAQPEVAELTGQIEALIATWLPAFRKAARSYVTVAIGCTGGQHRSVYLAEQLAGRFATGMDAISVRHRELNR.

11–18 (GLSGSGKS) is an ATP binding site. GTP is bound at residue 63-66 (DARN).

This sequence belongs to the RapZ-like family.

Displays ATPase and GTPase activities. The polypeptide is Nucleotide-binding protein Mlg_2233 (Alkalilimnicola ehrlichii (strain ATCC BAA-1101 / DSM 17681 / MLHE-1)).